A 289-amino-acid chain; its full sequence is Bidirectional sugar transporter SWEET10 (289 aa).

At 1–5 the chain is on the extracellular side; it reads MAISQ. Residues 6–26 traverse the membrane as a helical segment; sequence AVLATVFGILGNIISFFVCLA. The MtN3/slv 1 domain maps to 11-96; the sequence is VFGILGNIIS…SLFFFYAPKK (86 aa). The Cytoplasmic segment spans residues 27–43; it reads PIPTFVRIYKRKSSEGY. The helical transmembrane segment at 44–64 threads the bilayer; that stretch reads QSIPYVISLFSAMLWMYYAMI. At 65 to 70 the chain is on the extracellular side; it reads KKDAMM. The helical transmembrane segment at 71-91 threads the bilayer; the sequence is LITINSFAFVVQIVYISLFFF. At 92-103 the chain is on the cytoplasmic side; the sequence is YAPKKEKTLTVK. Residues 104–124 form a helical membrane-spanning segment; the sequence is FVLFVDVLGFGAIFVLTYFII. At 125–131 the chain is on the extracellular side; the sequence is HANKRVQ. Residues 131 to 214 form the MtN3/slv 2 domain; that stretch reads QVLGYICMVF…QMILFLIYKK (84 aa). Residues 132–152 form a helical membrane-spanning segment; the sequence is VLGYICMVFALSVFVAPLGII. Topologically, residues 153 to 165 are cytoplasmic; that stretch reads RKVIKTKSAEFMP. The helical transmembrane segment at 166-186 threads the bilayer; the sequence is FGLSFFLTLSAVMWFFYGLLL. Residues 187-190 are Extracellular-facing; sequence KDMN. A helical transmembrane segment spans residues 191 to 211; it reads IALPNVLGFIFGVLQMILFLI. Over 212-289 the chain is Cytoplasmic; sequence YKKPGTKVLE…EKEVFLISKN (78 aa).

Belongs to the SWEET sugar transporter family. In terms of assembly, forms heterooligomers with SWEET8.

It is found in the cell membrane. In terms of biological role, mediates both low-affinity uptake and efflux of sugar across the plasma membrane. This Arabidopsis thaliana (Mouse-ear cress) protein is Bidirectional sugar transporter SWEET10.